A 171-amino-acid chain; its full sequence is Protein FAM209A (171 aa).

The N-terminal stretch at methionine 1–alanine 19 is a signal peptide. Over phenylalanine 20 to threonine 52 the chain is Extracellular. A helical membrane pass occupies residues glutamine 53–leucine 73. The Cytoplasmic portion of the chain corresponds to glutamine 74 to serine 171. Residues lysine 81 to proline 107 are disordered. The stretch at asparagine 114–threonine 139 forms a coiled coil.

Belongs to the FAM209 family. Interacts with DPY19L2. Interacts with CYLC1; the interaction may be relevant for proper acrosome attachment to the nuclear envelope.

It is found in the nucleus inner membrane. Functionally, may play a role in sperm acrosome biogenesis. This Homo sapiens (Human) protein is Protein FAM209A.